The primary structure comprises 445 residues: UPF0210 protein SPG_0223 (445 aa).

It belongs to the UPF0210 family. As to quaternary structure, homodimer.

The protein is UPF0210 protein SPG_0223 of Streptococcus pneumoniae serotype 19F (strain G54).